Consider the following 184-residue polypeptide: Luciferin-binding protein (184 aa).

4 EF-hand domains span residues 10–45 (YHLR…IAKI), 46–81 (AKLS…EEAA), 98–133 (MAVI…VGPD), and 134–169 (ITDD…FLFG). Positions 111, 113, 115, 117, 122, 147, 149, 151, 153, and 158 each coordinate Ca(2+).

Its function is as follows. This Ca(2+)-dependent protein binds to luciferin. The luciferin of LBP is capable of reacting with luciferase and O(2) only when calcium is bound. This is Luciferin-binding protein from Renilla reniformis (Sea pansy).